Reading from the N-terminus, the 70-residue chain is Insulin (70 aa).

Intrachain disulfides connect Cys7–Cys56, Cys19–Cys69, and Cys55–Cys60. Residues 33 to 49 (FVDSLAGYSKHQNGGIS) constitute a propeptide, c peptide.

Belongs to the insulin family. In terms of assembly, heterodimer of a B chain and an A chain linked by two disulfide bonds.

The protein resides in the secreted. Functionally, insulin decreases blood glucose concentration. It increases cell permeability to monosaccharides, amino acids and fatty acids. It accelerates glycolysis, the pentose phosphate cycle, and glycogen synthesis in liver. The chain is Insulin (ins) from Torpedo marmorata (Marbled electric ray).